A 274-amino-acid chain; its full sequence is Nuclease (274 aa).

Residues 1-24 (MGICGKLGVAALVALIVGCSPVQS) form the signal peptide. His-124 acts as the Proton acceptor in catalysis. Residues Asn-155, Asp-246, Glu-249, Asp-255, Phe-256, Gln-265, and Glu-269 each contribute to the Mn(2+) site.

The protein belongs to the DNA/RNA non-specific endonuclease family. Monomer. Mn(2+) is required as a cofactor. The cofactor is Mg(2+). Ca(2+) serves as cofactor. It depends on Co(2+) as a cofactor. In terms of processing, the N-terminus is blocked.

The protein resides in the periplasm. In terms of biological role, catalyzes the degradation of both RNA and DNA; has the potential to act as an endonuclease. This Nostoc sp. (strain PCC 7120 / SAG 25.82 / UTEX 2576) protein is Nuclease (nucA).